The chain runs to 134 residues: Large ribosomal subunit protein eL32 (134 aa).

The protein belongs to the eukaryotic ribosomal protein eL32 family.

The protein is Large ribosomal subunit protein eL32 (RPL32) of Tetrahymena thermophila (strain SB210).